Reading from the N-terminus, the 231-residue chain is MPTIAPLSSPPQSQEQLLAQARQLAGYSLGELAALAGIPIPRDLKRDKGWTGILLELWLGASAGSKPEQDFAALGVELKTIPIDSRGRPLETTFVCVAPLTGNSGVTWESSHVRHKLQRVLWIPVEGERTIPLAARRVGAPLLWSPDEDEERQLRMDWEELMDLIVLGEVERITARHGEVLQLRPKAANSKALTEAIGAHGETILTLPRGFYLKKNFTAALLARHFLLQHD.

This sequence belongs to the MutH family.

It is found in the cytoplasm. Its function is as follows. Sequence-specific endonuclease that cleaves unmethylated GATC sequences. It is involved in DNA mismatch repair. The chain is DNA mismatch repair protein MutH from Klebsiella pneumoniae (strain 342).